Reading from the N-terminus, the 388-residue chain is Lipid-A-disaccharide synthase (388 aa).

It belongs to the LpxB family.

It catalyses the reaction a lipid X + a UDP-2-N,3-O-bis[(3R)-3-hydroxyacyl]-alpha-D-glucosamine = a lipid A disaccharide + UDP + H(+). It participates in bacterial outer membrane biogenesis; LPS lipid A biosynthesis. Functionally, condensation of UDP-2,3-diacylglucosamine and 2,3-diacylglucosamine-1-phosphate to form lipid A disaccharide, a precursor of lipid A, a phosphorylated glycolipid that anchors the lipopolysaccharide to the outer membrane of the cell. The protein is Lipid-A-disaccharide synthase of Burkholderia mallei (strain NCTC 10247).